Reading from the N-terminus, the 142-residue chain is Hemoglobin subunit alpha (142 aa).

The Globin domain occupies 2-142; sequence VLSSADKNNV…VSTVLTSKYR (141 aa). Position 4 is a phosphoserine (Ser-4). N6-succinyllysine occurs at positions 8 and 12. An N6-acetyllysine; alternate modification is found at Lys-17. An N6-succinyllysine; alternate modification is found at Lys-17. Tyr-25 carries the phosphotyrosine modification. A Phosphoserine modification is found at Ser-36. Lys-41 bears the N6-succinyllysine mark. Ser-50 is modified (phosphoserine). His-59 serves as a coordination point for O2. His-88 serves as a coordination point for heme b. Ser-103 bears the Phosphoserine mark. Thr-109 carries the post-translational modification Phosphothreonine. Phosphoserine is present on Ser-125. 2 positions are modified to phosphothreonine: Thr-135 and Thr-138. Ser-139 carries the post-translational modification Phosphoserine.

It belongs to the globin family. Heterotetramer of two alpha chains and two beta chains. In terms of tissue distribution, red blood cells.

Involved in oxygen transport from the lung to the various peripheral tissues. Functionally, hemopressin acts as an antagonist peptide of the cannabinoid receptor CNR1. Hemopressin-binding efficiently blocks cannabinoid receptor CNR1 and subsequent signaling. The sequence is that of Hemoglobin subunit alpha (HBA) from Panthera onca (Jaguar).